The sequence spans 538 residues: MEIKEISVPQQGVVADYMNGEKEIQSCFDYMLTEDAFKQRVQDLREREFFRQDLVAHLLEYNTKLQAGEATIQNVKALEDEDTYVVIAGQQAGLLTGPLYTIHKIISVLQLAKEKEESLGVKVVPVFWIAGEDHDMDEINHTFVTKNKKIKKTIFHDRNPKKASASESELSLEDCRKWIEEIFKTYPETNFTKDVLRFIDDSLGKSNTYVDFFGHLIMKMFINSGLILVDSHHPELRKLEVPFFKQIVSKYKEVQEGLHNQQEVIKELGYKPIIETKSNAVHIFMEIDNERVLLEDNQGKFVGKDGTYSFSYEELIEEMERSPERFSNNVVTRPLMQEYVFPTLAFIGGPGELAYWSELQQVFHTIGFRMPPVVPRITITYIERDIATDLHDLQLQESDPFLNNVDKLRENWLSNQIEEPIDERFVEAKKEIIDIHKSLQQFVKKIDPGLSSFAGKNEFKINEQIELLERMLKRNIEKKHEVELNKFRRIQFAIRPLGAPQERVWNVCYYLNQFGLDFVDRVMEKPFSWNGKHHVIKL.

The stretch at 460–485 (KINEQIELLERMLKRNIEKKHEVELN) forms a coiled coil.

The protein belongs to the BshC family.

Its function is as follows. Involved in bacillithiol (BSH) biosynthesis. May catalyze the last step of the pathway, the addition of cysteine to glucosamine malate (GlcN-Mal) to generate BSH. This is Putative cysteine ligase BshC from Bacillus cereus (strain Q1).